A 169-amino-acid chain; its full sequence is S-ribosylhomocysteine lyase (169 aa).

H54, H58, and C128 together coordinate Fe cation.

Belongs to the LuxS family. Homodimer. Fe cation is required as a cofactor.

The enzyme catalyses S-(5-deoxy-D-ribos-5-yl)-L-homocysteine = (S)-4,5-dihydroxypentane-2,3-dione + L-homocysteine. Involved in the synthesis of autoinducer 2 (AI-2) which is secreted by bacteria and is used to communicate both the cell density and the metabolic potential of the environment. The regulation of gene expression in response to changes in cell density is called quorum sensing. Catalyzes the transformation of S-ribosylhomocysteine (RHC) to homocysteine (HC) and 4,5-dihydroxy-2,3-pentadione (DPD). The sequence is that of S-ribosylhomocysteine lyase from Sulfurovum sp. (strain NBC37-1).